Here is a 493-residue protein sequence, read N- to C-terminus: Xylulose kinase (493 aa).

A substrate-binding site is contributed by 84-85 (QH). Catalysis depends on Asp-247, which acts as the Proton acceptor.

The protein belongs to the FGGY kinase family.

It catalyses the reaction D-xylulose + ATP = D-xylulose 5-phosphate + ADP + H(+). Catalyzes the phosphorylation of D-xylulose to D-xylulose 5-phosphate. The protein is Xylulose kinase of Haemophilus influenzae (strain ATCC 51907 / DSM 11121 / KW20 / Rd).